Reading from the N-terminus, the 87-residue chain is Protein Tat (87 aa).

The disordered stretch occupies residues 1 to 21 (MDPVDPNLEPWNHPGSQPRTP). Positions 1-24 (MDPVDPNLEPWNHPGSQPRTPCNK) are interaction with human CREBBP. The segment at 1 to 48 (MDPVDPNLEPWNHPGSQPRTPCNKCYCKKCCYHCQMCFITKGLGISYG) is transactivation. Zn(2+)-binding residues include Cys22, Cys25, and Cys27. A cysteine-rich region spans residues 22-37 (CNKCYCKKCCYHCQMC). Lys28 bears the N6-acetyllysine; by host PCAF mark. Cys30, His33, Cys34, and Cys37 together coordinate Zn(2+). The core stretch occupies residues 38–48 (FITKGLGISYG). The interval 45-87 (ISYGRKKRRQRRRPPQGNQAHQDPLPEQPSSQHRGDHPTGPKE) is disordered. Over residues 48–58 (GRKKRRQRRRP) the composition is skewed to basic residues. The Nuclear localization signal, RNA-binding (TAR), and protein transduction motif lies at 49 to 57 (RKKRRQRRR). The segment at 49 to 87 (RKKRRQRRRPPQGNQAHQDPLPEQPSSQHRGDHPTGPKE) is interaction with the host capping enzyme RNGTT. N6-acetyllysine; by host EP300 and GCN5L2 occurs at positions 50 and 51. Residues Arg52 and Arg53 each carry the asymmetric dimethylarginine; by host PRMT6 modification. Basic and acidic residues predominate over residues 77-87 (HRGDHPTGPKE). The Cell attachment site signature appears at 78-80 (RGD).

It belongs to the lentiviruses Tat family. As to quaternary structure, interacts with host CCNT1. Associates with the P-TEFb complex composed at least of Tat, P-TEFb (CDK9 and CCNT1), TAR RNA, RNA Pol II. Recruits the HATs CREBBP, TAF1/TFIID, EP300, PCAF and GCN5L2. Interacts with host KAT5/Tip60; this interaction targets the latter to degradation. Interacts with the host deacetylase SIRT1. Interacts with host capping enzyme RNGTT; this interaction stimulates RNGTT. Binds to host KDR, and to the host integrins ITGAV/ITGB3 and ITGA5/ITGB1. Interacts with host KPNB1/importin beta-1 without previous binding to KPNA1/importin alpha-1. Interacts with EIF2AK2. Interacts with host nucleosome assembly protein NAP1L1; this interaction may be required for the transport of Tat within the nucleus, since the two proteins interact at the nuclear rim. Interacts with host C1QBP/SF2P32; this interaction involves lysine-acetylated Tat. Interacts with the host chemokine receptors CCR2, CCR3 and CXCR4. Interacts with host DPP4/CD26; this interaction may trigger an anti-proliferative effect. Interacts with host LDLR. Interacts with the host extracellular matrix metalloproteinase MMP1. Interacts with host PRMT6; this interaction mediates Tat's methylation. Interacts with, and is ubiquitinated by MDM2/Hdm2. Interacts with host PSMC3 and HTATIP2. Interacts with STAB1; this interaction may overcome SATB1-mediated repression of IL2 and IL2RA (interleukin) in T cells by binding to the same domain than HDAC1. Interacts (when acetylated) with human CDK13, thereby increasing HIV-1 mRNA splicing and promoting the production of the doubly spliced HIV-1 protein Nef. Interacts with host TBP; this interaction modulates the activity of transcriptional pre-initiation complex. Interacts with host RELA. Interacts with host PLSCR1; this interaction negatively regulates Tat transactivation activity by altering its subcellular distribution. Post-translationally, asymmetrical arginine methylation by host PRMT6 seems to diminish the transactivation capacity of Tat and affects the interaction with host CCNT1. In terms of processing, acetylation by EP300, CREBBP, GCN5L2/GCN5 and PCAF regulates the transactivation activity of Tat. EP300-mediated acetylation of Lys-50 promotes dissociation of Tat from the TAR RNA through the competitive binding to PCAF's bromodomain. In addition, the non-acetylated Tat's N-terminus can also interact with PCAF. PCAF-mediated acetylation of Lys-28 enhances Tat's binding to CCNT1. Lys-50 is deacetylated by SIRT1. Polyubiquitination by host MDM2 does not target Tat to degradation, but activates its transactivation function and fosters interaction with CCNT1 and TAR RNA. Post-translationally, phosphorylated by EIF2AK2 on serine and threonine residues adjacent to the basic region important for TAR RNA binding and function. Phosphorylation of Tat by EIF2AK2 is dependent on the prior activation of EIF2AK2 by dsRNA.

It is found in the host nucleus. The protein localises to the host nucleolus. It localises to the host cytoplasm. Its subcellular location is the secreted. Transcriptional activator that increases RNA Pol II processivity, thereby increasing the level of full-length viral transcripts. Recognizes a hairpin structure at the 5'-LTR of the nascent viral mRNAs referred to as the transactivation responsive RNA element (TAR) and recruits the cyclin T1-CDK9 complex (P-TEFb complex) that will in turn hyperphosphorylate the RNA polymerase II to allow efficient elongation. The CDK9 component of P-TEFb and other Tat-activated kinases hyperphosphorylate the C-terminus of RNA Pol II that becomes stabilized and much more processive. Other factors such as HTATSF1/Tat-SF1, SUPT5H/SPT5, and HTATIP2 are also important for Tat's function. Besides its effect on RNA Pol II processivity, Tat induces chromatin remodeling of proviral genes by recruiting the histone acetyltransferases (HATs) CREBBP, EP300 and PCAF to the chromatin. This also contributes to the increase in proviral transcription rate, especially when the provirus integrates in transcriptionally silent region of the host genome. To ensure maximal activation of the LTR, Tat mediates nuclear translocation of NF-kappa-B by interacting with host RELA. Through its interaction with host TBP, Tat may also modulate transcription initiation. Tat can reactivate a latently infected cell by penetrating in it and transactivating its LTR promoter. In the cytoplasm, Tat is thought to act as a translational activator of HIV-1 mRNAs. Its function is as follows. Extracellular circulating Tat can be endocytosed by surrounding uninfected cells via the binding to several surface receptors such as CD26, CXCR4, heparan sulfate proteoglycans (HSPG) or LDLR. Neurons are rarely infected, but they internalize Tat via their LDLR. Through its interaction with nuclear HATs, Tat is potentially able to control the acetylation-dependent cellular gene expression. Modulates the expression of many cellular genes involved in cell survival, proliferation or in coding for cytokines or cytokine receptors. Tat plays a role in T-cell and neurons apoptosis. Tat induced neurotoxicity and apoptosis probably contribute to neuroAIDS. Circulating Tat also acts as a chemokine-like and/or growth factor-like molecule that binds to specific receptors on the surface of the cells, affecting many cellular pathways. In the vascular system, Tat binds to ITGAV/ITGB3 and ITGA5/ITGB1 integrins dimers at the surface of endothelial cells and competes with bFGF for heparin-binding sites, leading to an excess of soluble bFGF. This chain is Protein Tat, found in Homo sapiens (Human).